Consider the following 399-residue polypeptide: Glutathione S-transferase LANCL1 (399 aa).

A2 is subject to N-acetylalanine. N6-acetyllysine is present on K142. C276 serves as a coordination point for Zn(2+). K317 provides a ligand contact to glutathione. Residues C322 and H323 each contribute to the Zn(2+) site. 364–367 (RTAD) serves as a coordination point for glutathione.

The protein belongs to the LanC-like protein family. In terms of assembly, interacts with the C-terminal of STOM. Interacts with the EPS8 SH3 domain. Interaction with EPS8 is inhibited by glutathione binding. In terms of tissue distribution, detected in spinal cord (at protein level). Ubiquitous. Strongly expressed in brain, testis, alveolar macrophages and epithelial cells of the lung, kidney and intestine. Expression in brain increases during the first postnatal month and remaining high in adult.

It localises to the cytoplasm. The protein localises to the cell membrane. The catalysed reaction is RX + glutathione = an S-substituted glutathione + a halide anion + H(+). It catalyses the reaction 1-chloro-2,4-dinitrobenzene + glutathione = 2,4-dinitrophenyl-S-glutathione + chloride + H(+). In terms of biological role, functions as a glutathione transferase. Catalyzes conjugation of the glutathione (GSH) to artificial substrates 1-chloro-2,4-dinitrobenzene (CDNB) and p-nitrophenyl acetate. Mitigates neuronal oxidative stress during normal postnatal development and in response to oxidative stresses probably through GSH antioxidant defense mechanism. May play a role in EPS8 signaling. Binds glutathione. The protein is Glutathione S-transferase LANCL1 of Mus musculus (Mouse).